The sequence spans 292 residues: uncharacterized protein (292 aa).

A helical membrane pass occupies residues 66–86 (LFFYLLFWWTYLTIVVLLTVP).

The protein resides in the host membrane. This is an uncharacterized protein from Alcelaphine herpesvirus 1 (strain C500) (AlHV-1).